Reading from the N-terminus, the 1810-residue chain is MGDGERREDENPTTSAADDDDDEDYDEPGGGNHFLGFMFGNVDDSGDLDADYLDEDAKEHLFALADKLGPSLKDIDLIKPSAAPTDPSEQDYDAKAEDAVDYEDIDEEYDGPEVEAATEEDHLLSKKDYFSSNAVYASVNSKVSVFDEENYDEDEEPPNDNDLPSDNIVQNCTSASAEQLDMAPSNDNLAVEKMSSSLSEPEESFESEAFQKEMVAEEQLESKTATSLPVLCIEDGSVILKFSEIFGAQEPVRKAKMDRHKRPVNKELQITNFTDIVEEDEEVFLRSTIQNLSALKHIKTNDNFVESDSDESTSDVALRLKDSCLSEQPMKDKDIPTAVQSPVFPDFYPLEHENWENDIVWGNSPTTAIQPCLTSCAISKESLDDHNEDQAEGYVSGCWDVQNKFHSSSVMADPFGHTEIPDSTSYRSPENSYSPLRKETAQENNSLDEPNNITQPVKIDTTRHLNKLSLLNKELLEGSWLDNIVWDPSEDVPKPKLIFDLKDDHMLFEILDEKNGDHLRSHARAMIVTRPMKTSAVENVDHNNQAIALSGRFNISNDKFYSNRKMSQQARSHAKKRATMGLKLVHSVPAQKLQTMKPKLSIKEIANFHRPKAKWYPHENKLTARFQGDECSHGPMTAIVMTLGGKGVKFLVNAEETPLSVKSKASKKLEFKPSEKIKLFCSGKELQDDISLAMQNVRPNSILHVVRTEIHLWPKAQRLPGENKPLRPPGAFRKKSDLSVKDGHVFLMEYCEERPLLLANAGMAARLCTYYQKTSPSDQTATSLRSNSDGLGTMLAIDPADKSPFLGNIRSGSHQSCLETNMYRAPVFPHKVATTDYLLVRSPKGMLSLRRIDKLYAVGQQEPHMEVFSPGTKNMQNYILNRILVYVYREFRAREKPGIIPQIRADELPIQPPITEAIVRKRLKHCADLRKGPKGHLFYIQRPDFRIPSEEELRRLLTPENVCCYESMQAGQYRLKHLGIEKLTQPVGLASAMNQLPDEAIELAAAAHIERELQITSWNLTSNFVACTNQDKENIERLEITGVGDPSGRGLGFSYVRVTPKAPVSNSTHKKKSAAAKGTTVTGTDADLRRLSMDAARELLLKFGVPEEQIDKLTRWHRIAMVRKLSSEQAASGVTMDEIPVSKFARGQRMSFLQLQQQTKEKCQEIWDRQIQSLSAMDGNENGSDTEANSDLDSFAGDLENLLDAEEFDDEDVGNTDIRSDKMDGMRGLKMRRCHTQSQINEEIQDDVAEAALVEKLLEESDSDMKRKKQPVETTNYSTPMYNQGNKMKQGKAGQMIKSSVYAGALTPKESIPREAKEVENFAEGSLPSKLRTKTGFDANDDIILVKRKNIPGKDGFKEKRQGARGDTLVCGACGQLGHMRTNKLCPKYGEDPETSEMDVNSIRSHPPDIVSNAQIKTSNKRLVAKVSSEAFETEGPESIEKAKPVPVKFKCGAPEKSLDRNMSISASLVSDKRMMDATDSKSTGKVNKIKISNKIKYDDYPPDTPKPSVVIRPPAEVEKDLPRKKIIIKQPKVLGDQQRPTELRSGQEPRKTRKIVELSSFEKRDREDDNGFSGQPIQINSSHDRGWGLVGKRSKGIMESSESWRAFEEQRERQEQRLIEARIYDARREDELQKAKKKNKKKKKHEFRDDDLLDPRPYKNDRRVPERGRAAKRRTPADMTEYTPPAKRHRGGEVELSNILEKIVDHLRTMSCSFLFRKPVTKKEAPDYFDIIERPMDLGTIRDKVRKMEYKNREDFRHDVAQIALNAHTYNLNRHPHIPPLADELLELCDYLLEESADVLDDAEYAIED.

Residues Met-1–Glu-10 show a composition bias toward basic and acidic residues. Disordered stretches follow at residues Met-1 to Met-38 and Asp-413 to Thr-454. A compositionally biased stretch (acidic residues) spans Ala-17 to Glu-27. Composition is skewed to polar residues over residues Pro-421–Ser-434 and Gln-442–Thr-454. A Ubiquitin-like domain is found at Met-636 to Leu-712. Positions Ile-1240–Glu-1260 form a coiled coil. 3 disordered regions span residues Ser-1261–Gly-1291, Ser-1493–Glu-1609, and Glu-1632–Gly-1692. Residues Val-1272–Lys-1287 are compositionally biased toward polar residues. Basic and acidic residues predominate over residues Arg-1540–Asp-1570. A compositionally biased stretch (polar residues) spans Phe-1573 to Ser-1582. Residues Ala-1627–Glu-1647 are a coiled coil. Residues Ala-1636–His-1646 are compositionally biased toward basic residues. Over residues Glu-1647 to Arg-1670 the composition is skewed to basic and acidic residues. In terms of domain architecture, Bromo spans Lys-1688–Ser-1797.

Belongs to the TAF1 family. In terms of assembly, TAF1 is the largest component of transcription factor TFIID that is composed of TBP and a variety of TBP-associated factors.

The protein resides in the nucleus. Functionally, largest component and core scaffold of the TFIID basal transcription factor complex. This is Transcription initiation factor TFIID subunit 1 (TAF1) from Oryza sativa subsp. japonica (Rice).